The following is a 353-amino-acid chain: Mas-related G-protein coupled receptor member B5 (353 aa).

Topologically, residues 1–67 (MPDSPTESYG…SCIITFNTLN (67 aa)) are extracellular. Residues Asn-26 and Asn-44 are each glycosylated (N-linked (GlcNAc...) asparagine). A helical membrane pass occupies residues 68–90 (FLTATISVVGTAGNATVLRLLGF). Residues 91–96 (HMHRYA) are Cytoplasmic-facing. Residues 97–117 (FSVYVFNLAGADFLYLCTQTV) traverse the membrane as a helical segment. Residues 118-131 (YSLECVLQFDNSYF) lie on the Extracellular side of the membrane. Residues 132 to 152 (YFLLTILMFAYLAALCMIPAI) traverse the membrane as a helical segment. Over 153 to 180 (STERCLSVTWPIWYHCQRPRHTSATVCA) the chain is Cytoplasmic. Residues 181-201 (LFWAFSLLLRLLLGQGCGFLF) traverse the membrane as a helical segment. Residues 202–213 (GKYDYYFCRYCS) lie on the Extracellular side of the membrane. Residues 214–234 (FITTAFLIVLFVVPFVSSLAM) form a helical membrane-spanning segment. Topologically, residues 235 to 253 (LTKIICGSHRIPVTRFYVT) are cytoplasmic. A helical membrane pass occupies residues 254–274 (IAVTVLVFTFFGLPVGIISLL). Residues 275-289 (LPRIVVFRGVFYIYK) lie on the Extracellular side of the membrane. Residues 290–310 (IVTFLYSVNCCANPIIYFLIG) traverse the membrane as a helical segment. Residues 311-353 (SIRHHRLQRQSLKLLLQRAMQDTPEEEGGVKGPSQKSNELEIV) lie on the Cytoplasmic side of the membrane. Residues 333–353 (TPEEEGGVKGPSQKSNELEIV) are disordered.

This sequence belongs to the G-protein coupled receptor 1 family. Mas subfamily. Expressed strongly in newborn dorsal root ganglia, adult dorsal root ganglia and trigeminal ganlia.

The protein resides in the membrane. In terms of biological role, orphan receptor. Probably involved in the function of nociceptive neurons. May regulate nociceptor function and/or development, including the sensation or modulation of pain. The protein is Mas-related G-protein coupled receptor member B5 (Mrgprb5) of Rattus norvegicus (Rat).